Here is a 751-residue protein sequence, read N- to C-terminus: Glutamate carboxypeptidase 2 (751 aa).

The Cytoplasmic segment spans residues 1-19 (MWNPLHETDSTSVAWRRPR). Residue S10 is modified to Phosphoserine. Residues 20–43 (WLCAGALVLAAGLFVLGFLFGWFI) form a helical; Signal-anchor for type II membrane protein membrane-spanning segment. The Extracellular segment spans residues 44–750 (KSPNEAANIS…QAAAGTLREV (707 aa)). 6 N-linked (GlcNAc...) asparagine glycosylation sites follow: N51, N77, N122, N141, N154, and N196. Substrate contacts are provided by R211 and N258. Positions 270 and 273 each coordinate Ca(2+). The interval 275–588 (ANEYAYRLQI…QVRGGIVFEL (314 aa)) is NAALADase. N337 carries N-linked (GlcNAc...) asparagine glycosylation. 2 residues coordinate Zn(2+): H378 and D388. Position 425 (E425) interacts with substrate. E425 functions as the Nucleophile; for NAALADase activity in the catalytic mechanism. E426 provides a ligand contact to Zn(2+). Residues E434 and E437 each contribute to the Ca(2+) site. D454 serves as a coordination point for Zn(2+). N-linked (GlcNAc...) asparagine glycans are attached at residues N460 and N477. Residues 518–519 (SG), N520, 535–537 (RAR), Y553, and 553–554 (YH) each bind substrate. H554 is a binding site for Zn(2+). N-linked (GlcNAc...) asparagine glycosylation occurs at N614. Residue S629 is the Charge relay system of the active site. Residues N639 and N646 are each glycosylated (N-linked (GlcNAc...) asparagine). Active-site charge relay system residues include D667 and H690. Substrate is bound at residue 700–701 (KY).

It belongs to the peptidase M28 family. M28B subfamily. In terms of assembly, homodimer. The cofactor is Zn(2+). In terms of tissue distribution, high expression in the duodenum and in the jejunum brush-border membrane. Weak expression in kidney.

Its subcellular location is the cell membrane. The enzyme catalyses Release of an unsubstituted, C-terminal glutamyl residue, typically from Ac-Asp-Glu or folylpoly-gamma-glutamates.. Its activity is regulated as follows. The NAALADase activity is inhibited by quisqualic acid, beta-NAAG and 2-(phosphonomethyl) pentanedioic acid (PMPA). Ethanol ingestion decreases the folate hydrolase activity by 50%. Has both folate hydrolase and N-acetylated-alpha-linked-acidic dipeptidase (NAALADase) activity. Has a preference for tri-alpha-glutamate peptides. In the intestine, required for the uptake of folate. In the brain, modulates excitatory neurotransmission through the hydrolysis of the neuropeptide, N-aceylaspartylglutamate (NAAG), thereby releasing glutamate. In terms of biological role, also exhibits a dipeptidyl-peptidase IV type activity. In vitro, cleaves Gly-Pro-AMC. This chain is Glutamate carboxypeptidase 2 (FOLH1), found in Sus scrofa (Pig).